We begin with the raw amino-acid sequence, 299 residues long: Probable alpha-L-glutamate ligase (299 aa).

Residues 112–294 (LQLLTEQGIA…IALQMIVHIE (183 aa)) form the ATP-grasp domain. Residues lysine 148, 185–186 (DF), aspartate 194, and 218–220 (RAN) each bind ATP. Mg(2+) is bound by residues aspartate 255, glutamate 267, and asparagine 269. Residues aspartate 255, glutamate 267, and asparagine 269 each contribute to the Mn(2+) site.

The protein belongs to the RimK family. Requires Mg(2+) as cofactor. Mn(2+) is required as a cofactor.

This chain is Probable alpha-L-glutamate ligase, found in Histophilus somni (strain 129Pt) (Haemophilus somnus).